Reading from the N-terminus, the 210-residue chain is Glutathione S-transferase P 1 (210 aa).

The region spanning 2–81 (PPYTIVYFPV…HLGRSLGLYG (80 aa)) is the GST N-terminal domain. Residue tyrosine 4 is modified to Phosphotyrosine; by EGFR. Glutathione contacts are provided by residues tyrosine 8, arginine 14, tryptophan 39, lysine 45, and 52 to 53 (QL). Position 62 is a phosphothreonine (threonine 62). Position 65 to 66 (65 to 66 (QS)) interacts with glutathione. In terms of domain architecture, GST C-terminal spans 83–204 (NQREAAQMDM…SSPEHVNRPI (122 aa)). N6-succinyllysine is present on residues lysine 103 and lysine 116. Lysine 128 is modified (N6-acetyllysine).

As to quaternary structure, homodimer. Interacts with CDK5. Ubiquitously expressed.

The protein localises to the cytoplasm. It is found in the mitochondrion. Its subcellular location is the nucleus. It carries out the reaction RX + glutathione = an S-substituted glutathione + a halide anion + H(+). The catalysed reaction is prostaglandin J2 + glutathione = prostaglandin J2-S-(R)-glutathione. It catalyses the reaction prostaglandin J2 + glutathione = prostaglandin J2-S-(S)-glutathione. The enzyme catalyses prostaglandin A2 + glutathione = prostaglandin A2-S-(S)-glutathione. It carries out the reaction 11(S)-hydroxy-14(S),15(S)-epoxy-(5Z,8Z,12E)-eicosatrienoate + glutathione = (11S,15S)-dihydroxy-14(R)-S-glutathionyl-(5Z,8Z,12E)-eicosatrienoate. In terms of biological role, conjugation of reduced glutathione to a wide number of exogenous and endogenous hydrophobic electrophiles. Involved in the formation of glutathione conjugates of both prostaglandin A2 (PGA2) and prostaglandin J2 (PGJ2). Participates in the formation of novel hepoxilin regioisomers. Negatively regulates CDK5 activity via p25/p35 translocation to prevent neurodegeneration. This is Glutathione S-transferase P 1 from Mus musculus (Mouse).